The chain runs to 486 residues: Dipeptide and tripeptide permease B (486 aa).

Topologically, residues 1 to 27 are cytoplasmic; the sequence is MNKPVSIGLLQQPKPFFMIFFVELWER. The chain crosses the membrane as a helical span at residues 28–48; the sequence is FGYYGVQGVLTVYFVQKLGFS. The Periplasmic segment spans residues 49-52; it reads QEQA. A helical transmembrane segment spans residues 53-73; that stretch reads FITFGAFAALVFGLISIGGYV. The Cytoplasmic portion of the chain corresponds to 74 to 82; it reads GDHLLGTKR. A helical membrane pass occupies residues 83 to 103; sequence TIVLGAIVLAIGYFMTGLSIL. At 104-106 the chain is on the periplasmic side; that stretch reads HPN. The chain crosses the membrane as a helical span at residues 107-127; the sequence is LIFYALGTIAVGNGLFKANPA. Residues 128–146 are Cytoplasmic-facing; the sequence is SLLSKCYPPKDPRLDGAFT. A helical membrane pass occupies residues 147–167; the sequence is LFYMSINLGSLFSLALAPVIA. The Periplasmic portion of the chain corresponds to 168 to 172; it reads EKFSY. Residues 173-193 form a helical membrane-spanning segment; sequence AVTYNICGIGLIIALLVYIFC. Residues 194–211 lie on the Cytoplasmic side of the membrane; that stretch reads RNTVRNIGSEPDHQRINY. Residues 212-232 form a helical membrane-spanning segment; that stretch reads TNLFLVVAGSVVMVYVCAWLM. Position 233 (histidine 233) is a topological domain, periplasmic. The helical transmembrane segment at 234–254 threads the bilayer; it reads NVKIANIMLITLSVIVVFIFF. Residues 255-267 are Cytoplasmic-facing; that stretch reads REALKQDKIGRNK. A helical membrane pass occupies residues 268–288; it reads MFVAFILMLQAIVFFILYAQM. Topologically, residues 289-311 are periplasmic; it reads PTSLNFFAIHNVHHQLLGFNINP. The helical transmembrane segment at 312–332 threads the bilayer; the sequence is VSFQALNPFWIVVASPILAVL. The Cytoplasmic segment spans residues 333-348; sequence YTHWGAKGKDLTMPAK. A helical transmembrane segment spans residues 349–369; sequence FAVGMFLCSLGFLTAAAAGLW. Residues 370-375 lie on the Periplasmic side of the membrane; sequence FADEQG. Residues 376 to 396 form a helical membrane-spanning segment; sequence LTSAWFIVLVYLFQGVGELMI. Residues 397 to 419 lie on the Cytoplasmic side of the membrane; that stretch reads SALGLAMIAALVPQYLMGFILGM. A helical membrane pass occupies residues 420-440; it reads WYLTQATSSLLGGYVAALTAA. Over 441–456 the chain is Periplasmic; it reads PKGITDPLQTLPVYTS. Residues 457–477 form a helical membrane-spanning segment; sequence VFGKIGIATFIVAIIMAATVP. The Cytoplasmic portion of the chain corresponds to 478–486; that stretch reads LLNRMMQEK.

This sequence belongs to the major facilitator superfamily. Proton-dependent oligopeptide transporter (POT/PTR) (TC 2.A.17) family. DtpB subfamily.

Its subcellular location is the cell inner membrane. In terms of biological role, proton-dependent permease that transports di- and tripeptides. In Photorhabdus luminescens (Xenorhabdus luminescens), this protein is Dipeptide and tripeptide permease B.